The primary structure comprises 816 residues: MGDTIVEPAPLKPTSEPAPGPPGNNGGSLLSVITEGVGELSVIDPEVAQKACQEVLEKVKLLHGGVAISSRGTPLELVNGDGVDSEIRCLDDPPAQIREEEDEMGATVASGTAKGARRRRQNNSAKQSWLLRLFESKLFDISMAISYLYNSKEPGVQAYIGNRLFCFRNEDVDFYLPQLLNMYIHMDEDVGDAIKPYIVHRCRQSINFSLQCALLLGAYSSDMHISTQRHSRGTKLRKLILSDELKPAHRKRELPSLSPAPDTGLSPSKRTHQRSKSDATASISLSSNLKRTASNPKVENEDEELSSSTESIDNSFSSPVRLAPEREFIKSLMAIGKRLATLPTKEQKTQRLISELSLLNHKLPARVWLPTAGFDHHVVRVPHTQAVVLNSKDKAPYLIYVEVLECENFDTTSVPARIPENRIRSTRSVENLPECGITHEQRAGSFSTVPNYDNDDEAWSVDDIGELQVELPEVHTNSCDNISQFSVDSITSQESKEPVFIAAGDIRRRLSEQLAHTPTAFKRDPEDPSAVALKEPWQEKVRRIREGSPYGHLPNWRLLSVIVKCGDDLRQELLAFQVLKQLQSIWEQERVPLWIKPYKILVISADSGMIEPVVNAVSIHQVKKQSQLSLLDYFLQEHGSYTTEAFLSAQRNFVQSCAGYCLGCYLLQVKDRHNGNILLDAEGHIIHIDFGFILSSSPRNLGFETSAFKLTTEFVDVMGGLDGDMFNYYKMLMLQGLIAARKHMDKVVQIVEIMQQGSQLPCFHGSSTIRNLKERFHMSMTEEQLQLLVEQMVDGSMRSITTKLYDGFQYLTNGIM.

Disordered stretches follow at residues 1–30 (MGDT…GSLL), 101–120 (EDEM…RRRR), and 248–318 (AHRK…SFSS). Residue glycine 2 is modified to N-acetylglycine. The interval 2-68 (GDTIVEPAPL…VKLLHGGVAI (67 aa)) is interaction with ACBD3. The region spanning 29-242 (LLSVITEGVG…GTKLRKLILS (214 aa)) is the PIK helical domain. Serine 258 is modified (phosphoserine). Threonine 263 bears the Phosphothreonine mark. Residues serine 266, serine 275, serine 277, serine 284, and serine 294 each carry the phosphoserine modification. 2 stretches are compositionally biased toward polar residues: residues 278-297 (DATA…SNPK) and 306-318 (SSST…SFSS). Phosphoserine is present on serine 428. Residue threonine 438 is modified to Phosphothreonine. Serine 511 carries the post-translational modification Phosphoserine. Phosphothreonine occurs at positions 517 and 519. A PI3K/PI4K catalytic domain is found at 535–801 (EPWQEKVRRI…MVDGSMRSIT (267 aa)). Residues 541–547 (VRRIREG) are G-loop. Residues 668–676 (QVKDRHNGN) form a catalytic loop region. The activation loop stretch occupies residues 687-711 (HIDFGFILSSSPRNLGFETSAFKLT).

It belongs to the PI3/PI4-kinase family. Type III PI4K subfamily. Interacts with ARF1 and ARF3 in the Golgi complex, but not with ARF4, ARF5 or ARF6. Interacts with NCS1/FREQ in a calcium-independent manner. Interacts with CALN1/CABP8 and CALN2/CABP7; in a calcium-dependent manner; this interaction competes with NCS1/FREQ binding. Interacts with ACBD3. Interacts with ARMH3, YWHAB, YWHAE, YWHAG, YWHAH, YWHAQ, YWHAZ and SFN. Interacts with GGA2 (via VHS domain); the interaction is important for PI4KB location at the Golgi apparatus membrane. Interacts with ATG9A. Mg(2+) is required as a cofactor. Mn(2+) serves as cofactor.

The protein resides in the endomembrane system. It is found in the mitochondrion outer membrane. Its subcellular location is the rough endoplasmic reticulum membrane. The protein localises to the golgi apparatus. It localises to the golgi apparatus membrane. It catalyses the reaction a 1,2-diacyl-sn-glycero-3-phospho-(1D-myo-inositol) + ATP = a 1,2-diacyl-sn-glycero-3-phospho-(1D-myo-inositol 4-phosphate) + ADP + H(+). Its activity is regulated as follows. Inhibited by wortmannin. Increased kinase activity upon interaction with NCS1/FREQ. Functionally, phosphorylates phosphatidylinositol (PI) in the first committed step in the production of the second messenger inositol-1,4,5,-trisphosphate (PIP). May regulate Golgi disintegration/reorganization during mitosis, possibly via its phosphorylation. Involved in Golgi-to-plasma membrane trafficking. The protein is Phosphatidylinositol 4-kinase beta (PI4KB) of Bos taurus (Bovine).